Here is a 558-residue protein sequence, read N- to C-terminus: Trehalase 1 (558 aa).

It belongs to the glycosyl hydrolase 15 family.

It carries out the reaction alpha,alpha-trehalose + H2O = alpha-D-glucose + beta-D-glucose. The protein operates within glycan degradation; trehalose degradation; D-glucose from alpha,alpha-trehalose: step 1/1. Functionally, catalyzes the hydrolysis of alpha,alpha-trehalose into two molecules of D-glucose. In Sulfolobus acidocaldarius (strain ATCC 33909 / DSM 639 / JCM 8929 / NBRC 15157 / NCIMB 11770), this protein is Trehalase 1 (treH1).